We begin with the raw amino-acid sequence, 465 residues long: 23S rRNA (uracil(1939)-C(5))-methyltransferase RlmD (465 aa).

A disordered region spans residues 1 to 22 (MSEAVPTSARKSKNAPVAPGPA). The TRAM domain maps to 16–80 (PVAPGPAPVL…PSYEQATVVD (65 aa)). [4Fe-4S] cluster is bound by residues Cys-93, Cys-99, Cys-102, and Cys-181. Positions 289, 318, 323, 339, 367, and 388 each coordinate S-adenosyl-L-methionine. The Nucleophile role is filled by Cys-421.

It belongs to the class I-like SAM-binding methyltransferase superfamily. RNA M5U methyltransferase family. RlmD subfamily.

The catalysed reaction is uridine(1939) in 23S rRNA + S-adenosyl-L-methionine = 5-methyluridine(1939) in 23S rRNA + S-adenosyl-L-homocysteine + H(+). Catalyzes the formation of 5-methyl-uridine at position 1939 (m5U1939) in 23S rRNA. The chain is 23S rRNA (uracil(1939)-C(5))-methyltransferase RlmD from Burkholderia ambifaria (strain ATCC BAA-244 / DSM 16087 / CCUG 44356 / LMG 19182 / AMMD) (Burkholderia cepacia (strain AMMD)).